A 258-amino-acid polypeptide reads, in one-letter code: UPF0246 protein Bpro_3713 (258 aa).

The protein belongs to the UPF0246 family.

This is UPF0246 protein Bpro_3713 from Polaromonas sp. (strain JS666 / ATCC BAA-500).